The chain runs to 201 residues: MTPVLSLDMEDPIRFIDENGSFEVVKVGHNLAIHGKKIFDELAKRNLKIILDLKFCDIPSTVERSIKSWDHPAIIGFTVHSCAGYESVERALSATDKHVFVVVKLTSMEGSLEDYMDRIEKLNKLGCDFVLPGPWAKALREKIKGKILVPGIRMEVKADDQKDVVTLEEMKGIANFAVLGREIYLSENPREKIKRIKEMRL.

Residues Asp-8, Lys-26, 52-61 (DLKFCDIPST), Thr-106, Arg-153, Gln-161, Gly-180, and Arg-181 contribute to the substrate site. Lys-54 (proton donor) is an active-site residue.

It belongs to the OMP decarboxylase family. Type 1 subfamily. Homodimer.

It catalyses the reaction orotidine 5'-phosphate + H(+) = UMP + CO2. Its pathway is pyrimidine metabolism; UMP biosynthesis via de novo pathway; UMP from orotate: step 2/2. Its function is as follows. Catalyzes the decarboxylation of orotidine 5'-monophosphate (OMP) to uridine 5'-monophosphate (UMP). The sequence is that of Orotidine 5'-phosphate decarboxylase (pyrF) from Thermotoga maritima (strain ATCC 43589 / DSM 3109 / JCM 10099 / NBRC 100826 / MSB8).